We begin with the raw amino-acid sequence, 328 residues long: D-cysteine desulfhydrase (328 aa).

N6-(pyridoxal phosphate)lysine is present on Lys51.

This sequence belongs to the ACC deaminase/D-cysteine desulfhydrase family. In terms of assembly, homodimer. The cofactor is pyridoxal 5'-phosphate.

It catalyses the reaction D-cysteine + H2O = hydrogen sulfide + pyruvate + NH4(+) + H(+). In terms of biological role, catalyzes the alpha,beta-elimination reaction of D-cysteine and of several D-cysteine derivatives. It could be a defense mechanism against D-cysteine. In Salmonella typhi, this protein is D-cysteine desulfhydrase.